Consider the following 321-residue polypeptide: Biotin synthase (321 aa).

Residues 45–271 enclose the Radical SAM core domain; the sequence is FFGKKVKLNM…INPSKEIRIA (227 aa). Positions 63, 67, and 70 each coordinate [4Fe-4S] cluster. [2Fe-2S] cluster contacts are provided by C106, C139, C199, and R269.

This sequence belongs to the radical SAM superfamily. Biotin synthase family. In terms of assembly, homodimer. [4Fe-4S] cluster is required as a cofactor. Requires [2Fe-2S] cluster as cofactor.

It carries out the reaction (4R,5S)-dethiobiotin + (sulfur carrier)-SH + 2 reduced [2Fe-2S]-[ferredoxin] + 2 S-adenosyl-L-methionine = (sulfur carrier)-H + biotin + 2 5'-deoxyadenosine + 2 L-methionine + 2 oxidized [2Fe-2S]-[ferredoxin]. It participates in cofactor biosynthesis; biotin biosynthesis; biotin from 7,8-diaminononanoate: step 2/2. Its function is as follows. Catalyzes the conversion of dethiobiotin (DTB) to biotin by the insertion of a sulfur atom into dethiobiotin via a radical-based mechanism. The sequence is that of Biotin synthase from Staphylococcus haemolyticus (strain JCSC1435).